Consider the following 426-residue polypeptide: Serine--tRNA ligase (426 aa).

Residue 232–234 (TAE) participates in L-serine binding. Position 263–265 (263–265 (RSE)) interacts with ATP. Glu-286 contacts L-serine. 350 to 353 (EISS) serves as a coordination point for ATP. Position 385 (Ser-385) interacts with L-serine.

Belongs to the class-II aminoacyl-tRNA synthetase family. Type-1 seryl-tRNA synthetase subfamily. As to quaternary structure, homodimer. The tRNA molecule binds across the dimer.

The protein resides in the cytoplasm. The catalysed reaction is tRNA(Ser) + L-serine + ATP = L-seryl-tRNA(Ser) + AMP + diphosphate + H(+). It carries out the reaction tRNA(Sec) + L-serine + ATP = L-seryl-tRNA(Sec) + AMP + diphosphate + H(+). The protein operates within aminoacyl-tRNA biosynthesis; selenocysteinyl-tRNA(Sec) biosynthesis; L-seryl-tRNA(Sec) from L-serine and tRNA(Sec): step 1/1. Functionally, catalyzes the attachment of serine to tRNA(Ser). Is also able to aminoacylate tRNA(Sec) with serine, to form the misacylated tRNA L-seryl-tRNA(Sec), which will be further converted into selenocysteinyl-tRNA(Sec). The protein is Serine--tRNA ligase of Pediococcus pentosaceus (strain ATCC 25745 / CCUG 21536 / LMG 10740 / 183-1w).